Reading from the N-terminus, the 706-residue chain is MARHIMAVCVVCLLCAHRLHCQDHIESLLGPARVTTHNSQDQLNARVYTNLSPSSETTDRRQQRSASGDDDTFNYSISPPSRREKRHAGHEHGPTSESRVPQITQYYLEKLMAQDELMNSSGFDGLLQQLSLHSLASGASEGTCVPGSRLVHHVQPHDHHHAHHHEEEDHSLQLNNCTLIQNGTTSNVICPSLPNNNTHPLGKEAKNFTLSDKDLLHLCPILLYELKAQSGGCIEPAILSDIDTTEELLEAEKDKDIFYVWIYAFISVFACGILGLVGVAIIPFMGSRYYKYIIQYLVALAVGTMTGDALLHLLPHSLAGQDERGMIMKGLGCLGGIIFFYVMEHALTMISEWRKSVEKKETKKPSRAKVMRDPDSSVNNSVAGDKICKQKYSSYPYCYDEITMNNKQSEWMHLPFDVAAGAGGDAPSVAELRNGVGDHDGSNDMAAAAESLISPLHTNCVEMNHHNHNHKHNSHQQNHEGQDSNTIVTDLDGNAVYAVNKAKDKDSRNDHVTVILREHESSHHGHSHRHGHVHSPPETLSAVAWMIIMGDGLHNFTDGMAIGAAFAENIAGGFSTSLAVFCHELPHELGDFAILIKAGMSVKSAVYYNLLTGVLSFIGMIFGIAFGQSQDVAQWMFAVAAGLFIYIALVDMMPEISASHKSLGQFLLQILGMLSGVGIMLLIALYEGDLMSAFGTAGAASHQHAH.

The N-terminal stretch at 1–21 (MARHIMAVCVVCLLCAHRLHC) is a signal peptide. Over 22 to 261 (QDHIESLLGP…EKDKDIFYVW (240 aa)) the chain is Extracellular. A compositionally biased stretch (polar residues) spans 40–56 (QDQLNARVYTNLSPSSE). The disordered stretch occupies residues 40–101 (QDQLNARVYT…HGPTSESRVP (62 aa)). N-linked (GlcNAc...) asparagine glycans are attached at residues Asn-74, Asn-119, Asn-176, Asn-182, Asn-196, and Asn-207. The helical transmembrane segment at 262–282 (IYAFISVFACGILGLVGVAII) threads the bilayer. Residues 283–292 (PFMGSRYYKY) lie on the Cytoplasmic side of the membrane. The helical transmembrane segment at 293-313 (IIQYLVALAVGTMTGDALLHL) threads the bilayer. At 314–329 (LPHSLAGQDERGMIMK) the chain is on the extracellular side. A helical membrane pass occupies residues 330–350 (GLGCLGGIIFFYVMEHALTMI). Residues 351 to 604 (SEWRKSVEKK…LIKAGMSVKS (254 aa)) are Cytoplasmic-facing. A phosphoserine mark is found at Ser-376, Ser-377, and Ser-381. The chain crosses the membrane as a helical span at residues 605 to 625 (AVYYNLLTGVLSFIGMIFGIA). The Extracellular portion of the chain corresponds to 626-631 (FGQSQD). The helical transmembrane segment at 632–652 (VAQWMFAVAAGLFIYIALVDM) threads the bilayer. The Cytoplasmic portion of the chain corresponds to 653–665 (MPEISASHKSLGQ). The chain crosses the membrane as a helical span at residues 666–686 (FLLQILGMLSGVGIMLLIALY). The Extracellular portion of the chain corresponds to 687 to 706 (EGDLMSAFGTAGAASHQHAH).

This sequence belongs to the ZIP transporter (TC 2.A.5) family. Post-translationally, glycosylated. As to expression, maternal foi has almost completely disappeared by embryonic stage 3 except in the pole cells. In stage 6 embryos, expression is enriched in the invaginating mesoderm. In stage 9 embryos, high levels in the anterior and posterior midgut primordia. In stage 14 embryos, broad expression with low levels in the epidermis.

The protein localises to the cell membrane. Its function is as follows. Required for the normal migration of longitudinal and peripheral glial cells. During larval development, required for the migration of the subretinal glia into the eye disk. During embryonic development, also controls the migration of muscle cells toward their attachment sites. Required in the mesoderm for the correct morphogenesis of embryonic gonad and for tracheal branch fusion during tracheal development. Shg may be cooperating with foi to mediate a common mechanism for gonad and tracheal morphogenesis. Acts as a zinc transporter in both yeast and mammalian cells. In Drosophila melanogaster (Fruit fly), this protein is Zinc transporter foi.